Reading from the N-terminus, the 340-residue chain is Aldo-keto reductase yakc [NADP(+)] (340 aa).

Y56 (proton donor) is an active-site residue. H126 is a binding site for substrate. 208–218 (APLGRGFLTGA) serves as a coordination point for NADP(+).

Belongs to the aldo/keto reductase family. Aldo/keto reductase 2 subfamily. Monomer.

This Schizosaccharomyces pombe (strain 972 / ATCC 24843) (Fission yeast) protein is Aldo-keto reductase yakc [NADP(+)] (yakc).